A 398-amino-acid polypeptide reads, in one-letter code: Elongation factor Tu (398 aa).

Positions 10 to 207 constitute a tr-type G domain; it reads KPHVNIGTIG…TADEYIPEPE (198 aa). Residues 19 to 26 form a G1 region; sequence GHVDHGKT. 19–26 provides a ligand contact to GTP; sequence GHVDHGKT. Thr26 serves as a coordination point for Mg(2+). The segment at 63 to 67 is G2; sequence GITIN. The segment at 84–87 is G3; it reads DAPG. GTP-binding positions include 84 to 88 and 139 to 142; these read DAPGH and NKID. The G4 stretch occupies residues 139-142; it reads NKID. Residues 177–179 are G5; the sequence is SAL.

Belongs to the TRAFAC class translation factor GTPase superfamily. Classic translation factor GTPase family. EF-Tu/EF-1A subfamily. As to quaternary structure, monomer.

The protein resides in the cytoplasm. It carries out the reaction GTP + H2O = GDP + phosphate + H(+). Its function is as follows. GTP hydrolase that promotes the GTP-dependent binding of aminoacyl-tRNA to the A-site of ribosomes during protein biosynthesis. This is Elongation factor Tu from Streptococcus uberis (strain ATCC BAA-854 / 0140J).